Here is a 337-residue protein sequence, read N- to C-terminus: Annexin E1 (337 aa).

Annexin repeat units follow at residues Thr-10–Lys-80, Pro-81–Thr-154, Asp-161–Asp-238, and Asp-242–Glu-312.

This sequence belongs to the annexin family.

It is found in the cell projection. The protein localises to the cilium. Its subcellular location is the flagellum. Functionally, may function as a calcium-regulated structural element linking phospholipid bilayer and underlying axoneme. This chain is Annexin E1 (ANXE1), found in Giardia intestinalis (Giardia lamblia).